A 398-amino-acid chain; its full sequence is Phospholipase C (398 aa).

Positions 1–28 are cleaved as a signal peptide; sequence MKRKICKALICATLATSLWAGASTKVYA. Zn(2+)-binding residues include Trp29, His39, Asp84, His96, His154, Asp158, His164, His176, and Glu180. The region spanning 29-278 is the Zn-dependent PLC domain; the sequence is WDGKIDGTGT…HDVSEGNDPS (250 aa). The interval 275–283 is linker; that stretch reads NDPSVGKNV. Positions 284 to 398 constitute a PLAT domain; it reads KELVAYISTS…ISGNSTYNIK (115 aa). 11 residues coordinate Ca(2+): Asp297, Gly299, Thr300, Asp301, Asp321, Asn322, Gly324, Asn325, Asp326, Asp364, and Ala365.

The protein belongs to the bacterial zinc-metallophospholipase C family. Requires Ca(2+) as cofactor. The cofactor is Zn(2+).

The protein resides in the secreted. It catalyses the reaction a 1,2-diacyl-sn-glycero-3-phosphocholine + H2O = phosphocholine + a 1,2-diacyl-sn-glycerol + H(+). Bacterial hemolysins are exotoxins that attack blood cell membranes and cause cell rupture. Constitutes an essential virulence factor in gas gangrene. Binds to eukaryotic membranes where it hydrolyzes both phosphatidylcholine and sphingomyelin. The diacylglycerol produced can activate both the arachidonic acid pathway, leading to modulation of the inflammatory response cascade and thrombosis, and protein kinase C, leading to activation of eukaryotic phospholipases and further membrane damage. Acts on human and mouse erythrocytes, but not on rabbit or horse erythrocytes. The protein is Phospholipase C (plc) of Clostridium perfringens (strain 13 / Type A).